Reading from the N-terminus, the 269-residue chain is Myelin protein zero-like protein 1 (269 aa).

The N-terminal stretch at 1–35 (MAAPAGAGALIASPDRRRCLWSVLAAALGLLTYGV) is a signal peptide. An Ig-like V-type domain is found at 36-146 (SALEVYTPKE…VKNPPDIVVQ (111 aa)). Residues 36-162 (SALEVYTPKE…YVVEKEILPA (127 aa)) lie on the Extracellular side of the membrane. 3 N-linked (GlcNAc...) asparagine glycosylation sites follow: Asn50, Asn64, and Asn130. Cys58 and Cys135 form a disulfide bridge. Residues 163–183 (FPVWVVVGIVTAVVLGLTLLI) form a helical membrane-spanning segment. At 184 to 269 (TMILAVIYRR…SVVYADIRKN (86 aa)) the chain is on the cytoplasmic side. The interval 202–238 (GCNTSENVSPVKQVSRKSPSDTEGLVKSLPSGSHQGP) is disordered. Positions 203–213 (CNTSENVSPVK) are enriched in polar residues. Ser206, Ser210, Ser219, and Ser221 each carry phosphoserine. The ITIM motif 1 motif lies at 239 to 244 (VIYAQL). Tyr241 is subject to Phosphotyrosine. A Phosphoserine modification is found at Ser260. The ITIM motif 2 signature appears at 261–266 (VVYADI). Phosphotyrosine is present on Tyr263.

The protein belongs to the myelin P0 protein family. As to quaternary structure, interacts with phosphorylated PTPN11/SHP-2. Post-translationally, phosphorylated on tyrosine residues upon stimulation with pervanadate and concanavalin-A (ConA). Phosphorylation at Tyr-241 and Tyr-263 is required for interaction with PTPN11/SHP-2. Dephosphorylated by PTPN11/SHP-2 (in vitro). N-glycosylated.

The protein localises to the membrane. Its function is as follows. Cell surface receptor, which is involved in signal transduction processes. Recruits PTPN11/SHP-2 to the cell membrane and is a putative substrate of PTPN11/SHP-2. Is a major receptor for concanavalin-A (ConA) and is involved in cellular signaling induced by ConA, which probably includes Src family tyrosine-protein kinases. May be involved in regulation of integrin-mediated cell motility. The protein is Myelin protein zero-like protein 1 (MPZL1) of Bos taurus (Bovine).